The sequence spans 215 residues: Cytochrome b6 (215 aa).

A helical membrane pass occupies residues 32–52 (IFYCLGGITLTCFLVQVATGF). C35 is a binding site for heme c. 2 residues coordinate heme b: H86 and H100. The next 3 helical transmembrane spans lie at 90–110 (ASMM…TGGF), 116–136 (LTWV…VTGY), and 186–206 (LHTF…FLMI). Heme b is bound by residues H187 and H202.

The protein belongs to the cytochrome b family. PetB subfamily. In terms of assembly, the 4 large subunits of the cytochrome b6-f complex are cytochrome b6, subunit IV (17 kDa polypeptide, PetD), cytochrome f and the Rieske protein, while the 4 small subunits are PetG, PetL, PetM and PetN. The complex functions as a dimer. Requires heme b as cofactor. The cofactor is heme c.

Its subcellular location is the plastid. The protein resides in the chloroplast thylakoid membrane. Functionally, component of the cytochrome b6-f complex, which mediates electron transfer between photosystem II (PSII) and photosystem I (PSI), cyclic electron flow around PSI, and state transitions. The chain is Cytochrome b6 from Eucalyptus globulus subsp. globulus (Tasmanian blue gum).